The following is a 500-amino-acid chain: Probable cytosol aminopeptidase (500 aa).

Residues Lys268 and Asp273 each contribute to the Mn(2+) site. Residue Lys280 is part of the active site. The Mn(2+) site is built by Asp291, Asp350, and Glu352. The active site involves Arg354.

It belongs to the peptidase M17 family. Mn(2+) serves as cofactor.

It is found in the cytoplasm. The catalysed reaction is Release of an N-terminal amino acid, Xaa-|-Yaa-, in which Xaa is preferably Leu, but may be other amino acids including Pro although not Arg or Lys, and Yaa may be Pro. Amino acid amides and methyl esters are also readily hydrolyzed, but rates on arylamides are exceedingly low.. It catalyses the reaction Release of an N-terminal amino acid, preferentially leucine, but not glutamic or aspartic acids.. Presumably involved in the processing and regular turnover of intracellular proteins. Catalyzes the removal of unsubstituted N-terminal amino acids from various peptides. The protein is Probable cytosol aminopeptidase of Azoarcus sp. (strain BH72).